The primary structure comprises 1001 residues: Phosphatidylinositol 4,5-bisphosphate 5-phosphatase A (1001 aa).

A compositionally biased stretch (polar residues) spans 1-12 (MEGQSRSGSAKS). Disordered stretches follow at residues 1-130 (MEGQ…VASV) and 144-412 (SASA…QPTC). The RSXSXX motif 1 motif lies at 6–11 (RSGSAK). The segment covering 13–28 (GTRTGLGPLPGTHGAL) has biased composition (low complexity). Residues 29–42 (QTGTPSKKVNSSFQ) show a composition bias toward polar residues. The residue at position 56 (Arg56) is an Asymmetric dimethylarginine; alternate. Arg56 carries the omega-N-methylarginine; alternate modification. Position 65 is an omega-N-methylarginine (Arg65). Arg76 is modified (asymmetric dimethylarginine). Arg83 carries the post-translational modification Asymmetric dimethylarginine; alternate. Arg83 is subject to Omega-N-methylarginine; alternate. Residues 161 to 174 (SPTSRDQKQLSPTS) show a composition bias toward polar residues. Residue Ser171 is modified to Phosphoserine. Positions 180–196 (ALATSGLSLALASQEQP) are enriched in low complexity. Positions 197-210 (PQSPSSPSPVPSPV) are enriched in pro residues. Over residues 284–294 (ARPEAPRHSPE) the composition is skewed to basic and acidic residues. A phosphoserine mark is found at Ser292 and Ser325. Residues 338–348 (VPPPLPKPPRS) are compositionally biased toward pro residues. The short motif at 346-351 (PRSPSR) is the SH3-binding element. Composition is skewed to low complexity over residues 349 to 361 (PSRS…NRSP) and 394 to 411 (SPVA…AQPT). An RSXSXX motif 2 motif is present at residues 351–356 (RSPSRS). The segment at 420–723 (ITVVTWNVGT…SDHKPVAARF (304 aa)) is catalytic. Positions 724–835 (LLQFAFRDDV…IGVTEPFQIS (112 aa)) are required for ruffle localization. Residues 837 to 1001 (PTSESASSST…LGLEDGGLGP (165 aa)) are disordered. Residues 838 to 853 (TSESASSSTDSSGTSS) show a composition bias toward low complexity. 2 short sequence motifs (RSXSXX motif) span residues 869 to 874 (RSPSPG) and 880 to 885 (RSRSPG). Ser898 is subject to Phosphoserine. Composition is skewed to low complexity over residues 905-917 (SRSP…QLPR) and 925-936 (SSGSRGSSEEGP). Residues 906–911 (RSPSPQ) carry the RSXSXX motif 5 motif. Over residues 937–949 (SGPPGPWAFPPAV) the composition is skewed to pro residues. A Phosphoserine modification is found at Ser985.

Belongs to the inositol 1,4,5-trisphosphate 5-phosphatase type II family. Post-translationally, phosphorylated on Ser/Thr residues. Expressed in heart, brain, kidney, stomach, small intestine and lung. Not expressed in spleen, thymus, skeletal muscle, testis and skin.

It localises to the cytoplasm. It carries out the reaction 1D-myo-inositol 1,4,5-trisphosphate + H2O = 1D-myo-inositol 1,4-bisphosphate + phosphate. The catalysed reaction is 1D-myo-inositol 1,3,4,5-tetrakisphosphate + H2O = 1D-myo-inositol 1,3,4-trisphosphate + phosphate. It catalyses the reaction a 1,2-diacyl-sn-glycero-3-phospho-(1D-myo-inositol-4,5-bisphosphate) + H2O = a 1,2-diacyl-sn-glycero-3-phospho-(1D-myo-inositol 4-phosphate) + phosphate. In terms of biological role, inositol 5-phosphatase, which converts inositol 1,4,5-trisphosphate to inositol 1,4-bisphosphate. Also converts phosphatidylinositol 4,5-bisphosphate to phosphatidylinositol 4-phosphate and inositol 1,3,4,5-tetrakisphosphate to inositol 1,3,4-trisphosphate in vitro. May be involved in modulation of the function of inositol and phosphatidylinositol polyphosphate-binding proteins that are present at membranes ruffles. This is Phosphatidylinositol 4,5-bisphosphate 5-phosphatase A (Inpp5j) from Rattus norvegicus (Rat).